A 344-amino-acid chain; its full sequence is MSYPKKVELPLTNCNQINLTKHKLLVLYEDMLLGRNFEDMCAQMYYKGKMFGFVHLYNGQEAVSTGVIKLLDSKDYVCSTYRDHVHALSKGVPSQNVMAELFGKETGCSRGRGGSMHIFSAPHNFLGGFAFIAEGIPVATGAAFQSIYRQQVLKEPGELRVTACFFGDGTTNNGQFFECLNMAVLWKLPIIFVVENNQWAIGMAHHRSSSIPEIHKKAEAFGLPGIEVDGMDVLAVRQVAEKAVERARQGQGPTLIEALTYRFRGHSLADPDELRSRQEKEAWVARDPIKKLKKHILDNQIASSDELNDIQSSVKIDLEQSVEFAMSSPEPNISELKRYLFADN.

Residues H55, Y81, R82, A130, I132, D168, G169, and N197 each contribute to the pyruvate site. Thiamine diphosphate contacts are provided by Y81, R82, A130, I132, D168, G169, N197, and H266. Mg(2+) is bound at residue D168. N197 serves as a coordination point for Mg(2+).

In terms of assembly, heterodimer of an alpha and a beta chain. Thiamine diphosphate is required as a cofactor. Requires Mg(2+) as cofactor.

It is found in the plastid. It localises to the chloroplast. It carries out the reaction N(6)-[(R)-lipoyl]-L-lysyl-[protein] + pyruvate + H(+) = N(6)-[(R)-S(8)-acetyldihydrolipoyl]-L-lysyl-[protein] + CO2. In terms of biological role, the pyruvate dehydrogenase complex catalyzes the overall conversion of pyruvate to acetyl-CoA and CO(2). It contains multiple copies of three enzymatic components: pyruvate dehydrogenase (E1), dihydrolipoamide acetyltransferase (E2) and lipoamide dehydrogenase (E3). The polypeptide is Pyruvate dehydrogenase E1 component subunit alpha (pdhA) (Porphyra purpurea (Red seaweed)).